The sequence spans 114 residues: Iron-sulfur cluster insertion protein ErpA (114 aa).

Iron-sulfur cluster-binding residues include Cys42, Cys106, and Cys108.

This sequence belongs to the HesB/IscA family. In terms of assembly, homodimer. It depends on iron-sulfur cluster as a cofactor.

Functionally, required for insertion of 4Fe-4S clusters for at least IspG. This Wigglesworthia glossinidia brevipalpis protein is Iron-sulfur cluster insertion protein ErpA.